The primary structure comprises 213 residues: 3,4-dihydroxy-2-butanone 4-phosphate synthase (213 aa).

D-ribulose 5-phosphate is bound by residues 37–38 (RE), Asp-42, 150–154 (RPGHT), and Glu-174. Residue Glu-38 coordinates Mg(2+). His-153 contributes to the Mg(2+) binding site.

The protein belongs to the DHBP synthase family. As to quaternary structure, homodimer. Mg(2+) is required as a cofactor. It depends on Mn(2+) as a cofactor.

The catalysed reaction is D-ribulose 5-phosphate = (2S)-2-hydroxy-3-oxobutyl phosphate + formate + H(+). It functions in the pathway cofactor biosynthesis; riboflavin biosynthesis; 2-hydroxy-3-oxobutyl phosphate from D-ribulose 5-phosphate: step 1/1. In terms of biological role, catalyzes the conversion of D-ribulose 5-phosphate to formate and 3,4-dihydroxy-2-butanone 4-phosphate. This chain is 3,4-dihydroxy-2-butanone 4-phosphate synthase, found in Clostridium botulinum (strain Langeland / NCTC 10281 / Type F).